Consider the following 122-residue polypeptide: uncharacterized protein (122 aa).

This is an uncharacterized protein from Rickettsia conorii (strain ATCC VR-613 / Malish 7).